Reading from the N-terminus, the 889-residue chain is Exocyst complex component 1 (889 aa).

Phosphoserine occurs at positions 145 and 148. Positions 156-269 (RAVQKTQHMD…GHVKETMEKI (114 aa)) form a coiled coil. S456 is subject to Phosphoserine.

It belongs to the SEC3 family. As to quaternary structure, the exocyst complex is composed of Sec3/Exoc1, Sec5/Exoc2, Sec6/Exoc3, Sec8/Exoc4, Sec10/Exoc5, Sec15/Exoc6, Exo70/Exoc7 and Exo84/Exoc8.

Functionally, component of the exocyst complex involved in the docking of exocytic vesicles with fusion sites on the plasma membrane. The protein is Exocyst complex component 1 of Drosophila melanogaster (Fruit fly).